The chain runs to 461 residues: A-type ATP synthase subunit B (461 aa).

This sequence belongs to the ATPase alpha/beta chains family. In terms of assembly, has multiple subunits with at least A(3), B(3), C, D, E, F, H, I and proteolipid K(x).

It localises to the cell membrane. Its function is as follows. Component of the A-type ATP synthase that produces ATP from ADP in the presence of a proton gradient across the membrane. The B chain is a regulatory subunit. The sequence is that of A-type ATP synthase subunit B from Methanoculleus marisnigri (strain ATCC 35101 / DSM 1498 / JR1).